A 362-amino-acid chain; its full sequence is Inactive 2'-5' oligoadenylate synthetase 1C (362 aa).

The protein belongs to the 2-5A synthase family. Expressed at highest level in brain with lesser amounts in spleen, kidney, stomach, liver, intestine, ovary, skin and testis. Not detected in lung, thymus, heart and uterus.

In terms of biological role, does not have 2'-5'-OAS activity, but can bind double-stranded RNA. This chain is Inactive 2'-5' oligoadenylate synthetase 1C, found in Mus musculus (Mouse).